Consider the following 215-residue polypeptide: Phosphoribosylglycinamide formyltransferase (215 aa).

(6R)-10-formyltetrahydrofolate contacts are provided by residues arginine 74, 99-102 (MRIL), and asparagine 116. Residue histidine 118 is the Proton donor of the active site.

Belongs to the GART family.

It carries out the reaction N(1)-(5-phospho-beta-D-ribosyl)glycinamide + (6R)-10-formyltetrahydrofolate = N(2)-formyl-N(1)-(5-phospho-beta-D-ribosyl)glycinamide + (6S)-5,6,7,8-tetrahydrofolate + H(+). It functions in the pathway purine metabolism; IMP biosynthesis via de novo pathway; N(2)-formyl-N(1)-(5-phospho-D-ribosyl)glycinamide from N(1)-(5-phospho-D-ribosyl)glycinamide (10-formyl THF route): step 1/1. Functionally, catalyzes the transfer of a formyl group from 10-formyltetrahydrofolate to 5-phospho-ribosyl-glycinamide (GAR), producing 5-phospho-ribosyl-N-formylglycinamide (FGAR) and tetrahydrofolate. The protein is Phosphoribosylglycinamide formyltransferase of Mycobacterium tuberculosis (strain CDC 1551 / Oshkosh).